Reading from the N-terminus, the 172-residue chain is Small ribosomal subunit protein uS5 (172 aa).

The 64-residue stretch at 16–79 folds into the S5 DRBM domain; that stretch reads LKEKLVHINR…EDGKKNVVKV (64 aa).

This sequence belongs to the universal ribosomal protein uS5 family. As to quaternary structure, part of the 30S ribosomal subunit. Contacts proteins S4 and S8.

In terms of biological role, with S4 and S12 plays an important role in translational accuracy. Functionally, located at the back of the 30S subunit body where it stabilizes the conformation of the head with respect to the body. The chain is Small ribosomal subunit protein uS5 from Prosthecochloris aestuarii (strain DSM 271 / SK 413).